We begin with the raw amino-acid sequence, 67 residues long: Medusin-S1 (67 aa).

A signal peptide spans Met-1–Cys-22. The propeptide occupies Glu-23–Arg-48. Positions Lys-26–Lys-47 are disordered. The span at Glu-31–Arg-40 shows a compositional bias: acidic residues. Leu-66 carries the post-translational modification Leucine amide.

This sequence belongs to the frog skin active peptide (FSAP) family. Medusin subfamily. Expressed by the skin glands.

Its subcellular location is the secreted. The protein resides in the target cell membrane. Functionally, antibacterial peptide with moderate activity against the Gram-positive bacteria (S.aureus ATCC 25923, MIC=25 uM), but not against all other bacteria (both Gram-positive and Gram-negative) tested. Does not show activity against fungi, and against Leishmania species. It adopts an alpha-helical structure with very low amphipathicity in membrane environments. The chain is Medusin-S1 from Phyllomedusa sauvagei (Sauvage's leaf frog).